A 534-amino-acid polypeptide reads, in one-letter code: ATP synthase subunit alpha 2 (534 aa).

175 to 182 (GDRQTGKT) provides a ligand contact to ATP. The tract at residues 506–534 (FQPAPEPETAPKTKTDIKPKPKAAGGESS) is disordered. The segment covering 514 to 524 (TAPKTKTDIKP) has biased composition (basic and acidic residues).

Belongs to the ATPase alpha/beta chains family. As to quaternary structure, F-type ATPases have 2 components, CF(1) - the catalytic core - and CF(0) - the membrane proton channel. CF(1) has five subunits: alpha(3), beta(3), gamma(1), delta(1), epsilon(1). CF(0) has three main subunits: a(1), b(2) and c(9-12). The alpha and beta chains form an alternating ring which encloses part of the gamma chain. CF(1) is attached to CF(0) by a central stalk formed by the gamma and epsilon chains, while a peripheral stalk is formed by the delta and b chains.

Its subcellular location is the cell inner membrane. The catalysed reaction is ATP + H2O + 4 H(+)(in) = ADP + phosphate + 5 H(+)(out). Functionally, produces ATP from ADP in the presence of a proton gradient across the membrane. The alpha chain is a regulatory subunit. In Albidiferax ferrireducens (strain ATCC BAA-621 / DSM 15236 / T118) (Rhodoferax ferrireducens), this protein is ATP synthase subunit alpha 2.